The primary structure comprises 535 residues: Glucose-6-phosphate isomerase (535 aa).

Catalysis depends on Glu-359, which acts as the Proton donor. Catalysis depends on residues His-390 and Lys-505.

Belongs to the GPI family.

The protein localises to the cytoplasm. The enzyme catalyses alpha-D-glucose 6-phosphate = beta-D-fructose 6-phosphate. It participates in carbohydrate biosynthesis; gluconeogenesis. It functions in the pathway carbohydrate degradation; glycolysis; D-glyceraldehyde 3-phosphate and glycerone phosphate from D-glucose: step 2/4. Functionally, catalyzes the reversible isomerization of glucose-6-phosphate to fructose-6-phosphate. The protein is Glucose-6-phosphate isomerase of Treponema pallidum (strain Nichols).